Consider the following 376-residue polypeptide: Chaperone protein DnaJ (376 aa).

The J domain occupies 5–69 (DYYEVLGISK…QKRAQYDQYG (65 aa)). The CR-type zinc-finger motif lies at 133-215 (GKDAEIEIPR…CHGKGRVTKT (83 aa)). Positions 146, 149, 163, 166, 189, 192, 203, and 206 each coordinate Zn(2+). CXXCXGXG motif repeat units lie at residues 146–153 (CDTCHGSG), 163–170 (CSHCGGKG), 189–196 (CQYCNGTG), and 203–210 (CPTCHGKG).

The protein belongs to the DnaJ family. In terms of assembly, homodimer. It depends on Zn(2+) as a cofactor.

The protein resides in the cytoplasm. Its function is as follows. Participates actively in the response to hyperosmotic and heat shock by preventing the aggregation of stress-denatured proteins and by disaggregating proteins, also in an autonomous, DnaK-independent fashion. Unfolded proteins bind initially to DnaJ; upon interaction with the DnaJ-bound protein, DnaK hydrolyzes its bound ATP, resulting in the formation of a stable complex. GrpE releases ADP from DnaK; ATP binding to DnaK triggers the release of the substrate protein, thus completing the reaction cycle. Several rounds of ATP-dependent interactions between DnaJ, DnaK and GrpE are required for fully efficient folding. Also involved, together with DnaK and GrpE, in the DNA replication of plasmids through activation of initiation proteins. The chain is Chaperone protein DnaJ from Listeria monocytogenes serotype 4a (strain HCC23).